A 1028-amino-acid chain; its full sequence is Protein SMAX1-LIKE 5 (1028 aa).

A Clp R domain is found at 8 to 199 (IQQTLTTEAA…CVEDCSVSSV (192 aa)). Repeat regions lie at residues 12–102 (LTTE…LNRL) and 116–199 (LANA…VSSV). Residues 871–875 (LDLNI) carry the EAR motif.

The protein belongs to the ClpA/ClpB family. Interacts probably with TPL/TPR in an EAR-motif dependent manner. In terms of tissue distribution, detected in roots, seedlings and axillary branches.

May function in a transcriptional corepressor complex. This Arabidopsis thaliana (Mouse-ear cress) protein is Protein SMAX1-LIKE 5.